We begin with the raw amino-acid sequence, 379 residues long: Sialidase-2 (379 aa).

The short motif at 20–23 (YRIP) is the FRIP motif element. Substrate contacts are provided by Arg-21 and Arg-41. Asp-46 functions as the Proton acceptor in the catalytic mechanism. A BNR 1 repeat occupies 127–138 (ITSTDHGKTWSA). Substrate contacts are provided by Tyr-179 and Tyr-181. A BNR 2 repeat occupies 197–208 (FLSHDHGSTWEL). 3 residues coordinate substrate: Glu-218, Arg-237, and Arg-303. Tyr-333 (nucleophile) is an active-site residue. Glu-354 is a catalytic residue.

Belongs to the glycosyl hydrolase 33 family.

The protein resides in the cytoplasm. The catalysed reaction is Hydrolysis of alpha-(2-&gt;3)-, alpha-(2-&gt;6)-, alpha-(2-&gt;8)- glycosidic linkages of terminal sialic acid residues in oligosaccharides, glycoproteins, glycolipids, colominic acid and synthetic substrates.. Catalyzes the removal of sialic acid (N-acetylneuraminic acid) moieties from glycoproteins, oligosaccharides and gangliosides. In Cricetulus griseus (Chinese hamster), this protein is Sialidase-2 (NEU2).